The chain runs to 201 residues: Single-stranded DNA-binding protein DdrA (201 aa).

The protein belongs to the RAD52 family. As to quaternary structure, the truncated form (1-160) of DdrA forms heptameric rings that can assemble into a 3-ring structure.

In terms of biological role, ssDNA-binding protein that contributes to the ionizing radiation resistance of D.deserti. Plays a role in DNA repair and genome reconstitution, in a RecA-independent process, since DdrA is essential for recovery from severe genomic fragmentation as a result of exposure to severe levels of ionizing radiation in an environment lacking nutrients. In vitro, binds to the 3'-ends of single-stranded DNA, and probably protects them from nuclease degradation. Thus, DdrA is part of a DNA end-protection system that helps to preserve genome integrity following irradiation or desiccation. In Deinococcus deserti (strain DSM 17065 / CIP 109153 / LMG 22923 / VCD115), this protein is Single-stranded DNA-binding protein DdrA (ddrA).